Here is a 694-residue protein sequence, read N- to C-terminus: Ferric reductase transmembrane component 5 (694 aa).

The N-terminal stretch at 1–19 (MLFARLVLLLVYLAPGSLA) is a signal peptide. Over 20–163 (KPASTKKRTQ…LDNIDKGNVY (144 aa)) the chain is Extracellular. N117 is a glycosylation site (N-linked (GlcNAc...) asparagine). A helical membrane pass occupies residues 164 to 184 (GVTICLYWIGVLFIAAVYHFL). At 185 to 222 (NFSRLKQTVFKNKVSAFLRGHYVLPALVHNHAMSVGRW) the chain is on the cytoplasmic side. A helical transmembrane segment spans residues 223 to 243 (FFIGLVPTRLETLVLFGYVLL). Over 244–267 (HGFLLSSYNFDHNELLSDRRSQVL) the chain is Extracellular. A helical transmembrane segment spans residues 268–288 (IFLSDRAGILAFAHFPLIVLF). The 135-residue stretch at 274–408 (AGILAFAHFP…GWGEWIMACA (135 aa)) folds into the Ferric oxidoreductase domain. Residues 289–311 (GGKNSTMTWLTGIRYTAFITYHK) lie on the Cytoplasmic side of the membrane. Residues H310 and H324 each contribute to the heme site. Residues 312–334 (WLGRFMLVDCTIHAIGYTYHAYI) traverse the membrane as a helical segment. Over 335–347 (ENYWKYVKYSDLW) the chain is Extracellular. The helical transmembrane segment at 348–368 (TSGRHAMIIVGILVFFSFFFF) threads the bilayer. Residues 369–371 (RRH) are Cytoplasmic-facing. A helical membrane pass occupies residues 372 to 392 (YYELFVITHIILAIGFFHACW). Residues H380 and H394 each coordinate heme. The Extracellular segment spans residues 393–403 (KHCYKLGWGEW). Residues 404–424 (IMACALFWIADRILRLIKIAI) traverse the membrane as a helical segment. The FAD-binding FR-type domain occupies 409–528 (LFWIADRILR…EGPYGQSTRT (120 aa)). Topologically, residues 425 to 694 (FGMPWAKLKL…IEYVEEFQNW (270 aa)) are cytoplasmic. FAD is bound at residue 473-479 (HPFTVMD). Residues 520-523 (GPYG) and 660-661 (CG) each bind NADP(+).

Belongs to the ferric reductase (FRE) family. Requires FAD as cofactor.

It is found in the cell membrane. It carries out the reaction 2 a Fe(II)-siderophore + NADP(+) + H(+) = 2 a Fe(III)-siderophore + NADPH. In terms of biological role, metalloreductase responsible for reducing extracellular iron and copper prior to import. Catalyzes the reductive uptake of Fe(3+)-salts and Fe(3+) bound to catecholate or hydroxamate siderophores. Fe(3+) is reduced to Fe(2+), which then dissociates from the siderophore and can be imported by the high-affinity Fe(2+) transport complex in the plasma membrane. This Saccharomyces cerevisiae (strain ATCC 204508 / S288c) (Baker's yeast) protein is Ferric reductase transmembrane component 5 (FRE5).